The primary structure comprises 632 residues: Chaperone protein HtpG (632 aa).

The segment at 1–339 (MTQQTMSFQA…SSDLPLNVSR (339 aa)) is a; substrate-binding. Positions 340–559 (EILQESRDVK…DNDMSGYLQR (220 aa)) are b. The tract at residues 560 to 632 (MLKAAGQSAP…TNALLLSRAA (73 aa)) is c.

Belongs to the heat shock protein 90 family. In terms of assembly, homodimer.

The protein localises to the cytoplasm. Functionally, molecular chaperone. Has ATPase activity. In Burkholderia pseudomallei (strain 668), this protein is Chaperone protein HtpG.